Reading from the N-terminus, the 99-residue chain is Putative RNA-binding protein RbpE (99 aa).

The 78-residue stretch at 2–79 (SIYVGNLSYS…RVLKVNKARP (78 aa)) folds into the RRM domain. A disordered region spans residues 78–99 (RPREEKGARSGGGSWSRNNGGY). Gly residues predominate over residues 86 to 99 (RSGGGSWSRNNGGY).

The polypeptide is Putative RNA-binding protein RbpE (rbpE) (Nostoc sp. (strain PCC 7120 / SAG 25.82 / UTEX 2576)).